The following is a 291-amino-acid chain: MPSSGALKDLSFSQHFRMMVICIVLLQVLLQAVSVAVTYMYFTNEMKQLQDNYSKIGLACFSKTDEDFWDSTDGEILNRPCLQVKRQLYQLIEEVTLRTFQDTISTVPEKQLSTPPLPRGGRPQKVAAHITGITRRSNSALIPISKDGKTLGQKIESWESSRKGHSFLNHVLFRNGELVIEQEGLYYIYSQTYFRFQEAEDASKMVSKDKVRTKQLVQYIYKYTSYPDPIVLMKSARNSCWSRDAEYGLYSIYQGGLFELKKNDRIFVSVTNEHLMDLDQEASFFGAFLIN.

Residues 1 to 17 lie on the Cytoplasmic side of the membrane; that stretch reads MPSSGALKDLSFSQHFR. The helical; Signal-anchor for type II membrane protein transmembrane segment at 18 to 38 threads the bilayer; it reads MMVICIVLLQVLLQAVSVAVT. The Extracellular portion of the chain corresponds to 39–291; it reads YMYFTNEMKQ…ASFFGAFLIN (253 aa). Asparagine 52 is a glycosylation site (N-linked (GlcNAc...) asparagine). Residues 126–290 enclose the THD domain; it reads VAAHITGITR…EASFFGAFLI (165 aa). Residue cysteine 240 coordinates Zn(2+).

The protein belongs to the tumor necrosis factor family. In terms of assembly, homotrimer. One TNFSF10 homotrimer interacts with three TNFSF10A mononers. One TNFSF10 homotrimer interacts with three TNFSF10B mononers. In terms of processing, tyrosine phosphorylated by PKDCC/VLK. Widespread.

The protein resides in the cell membrane. It localises to the secreted. Functionally, cytokine that binds to TNFRSF10A/TRAILR1, TNFRSF10B/TRAILR2, TNFRSF10C/TRAILR3, TNFRSF10D/TRAILR4 and possibly also to TNFRSF11B/OPG. Induces apoptosis. Its activity may be modulated by binding to the decoy receptors TNFRSF10C/TRAILR3, TNFRSF10D/TRAILR4 and TNFRSF11B/OPG that cannot induce apoptosis. The polypeptide is Tumor necrosis factor ligand superfamily member 10 (Tnfsf10) (Mus musculus (Mouse)).